A 332-amino-acid polypeptide reads, in one-letter code: Adenosine deaminase (332 aa).

2 residues coordinate Zn(2+): His-12 and His-14. The substrate site is built by His-14, Asp-16, and Gly-170. Position 197 (His-197) interacts with Zn(2+). Glu-200 acts as the Proton donor in catalysis. Residue Asp-278 participates in Zn(2+) binding.

It belongs to the metallo-dependent hydrolases superfamily. Adenosine and AMP deaminases family. Adenosine deaminase subfamily. Requires Zn(2+) as cofactor.

The enzyme catalyses adenosine + H2O + H(+) = inosine + NH4(+). It carries out the reaction 2'-deoxyadenosine + H2O + H(+) = 2'-deoxyinosine + NH4(+). Catalyzes the hydrolytic deamination of adenosine and 2-deoxyadenosine. The protein is Adenosine deaminase of Clostridium perfringens (strain 13 / Type A).